A 38-amino-acid chain; its full sequence is SYIITTPRMWVAGSPAQVRTYVMPYGCGEQNMVNFAPN.

Residues 27–30 (CGEQ) constitute a cross-link (isoglutamyl cysteine thioester (Cys-Gln)).

This sequence belongs to the protease inhibitor I39 (alpha-2-macroglobulin) family. As to quaternary structure, homodimer; disulfide-linked. In terms of tissue distribution, hemolymph.

The protein resides in the secreted. In terms of biological role, is able to inhibit all four classes of proteinases by a unique 'trapping' mechanism. This protein has a peptide stretch, called the 'bait region' which contains specific cleavage sites for different proteinases. When a proteinase cleaves the bait region, a conformational change is induced in the protein which traps the proteinase. The entrapped enzyme remains active against low molecular weight substrates (activity against high molecular weight substrates is greatly reduced). Following cleavage in the bait region a thioester bond is hydrolyzed and mediates the covalent binding of the protein to the proteinase. This Homarus americanus (American lobster) protein is Alpha-2-macroglobulin homolog.